Here is a 345-residue protein sequence, read N- to C-terminus: Anthranilate phosphoribosyltransferase (345 aa).

5-phospho-alpha-D-ribose 1-diphosphate contacts are provided by residues glycine 84, 87–88 (GD), threonine 92, 94–97 (NIST), 112–120 (KHGNRSVSS), and serine 124. Glycine 84 is an anthranilate binding site. Serine 96 lines the Mg(2+) pocket. Asparagine 115 contributes to the anthranilate binding site. Arginine 170 is an anthranilate binding site. Residues aspartate 229 and glutamate 230 each contribute to the Mg(2+) site.

This sequence belongs to the anthranilate phosphoribosyltransferase family. As to quaternary structure, homodimer. The cofactor is Mg(2+).

The catalysed reaction is N-(5-phospho-beta-D-ribosyl)anthranilate + diphosphate = 5-phospho-alpha-D-ribose 1-diphosphate + anthranilate. Its pathway is amino-acid biosynthesis; L-tryptophan biosynthesis; L-tryptophan from chorismate: step 2/5. Its function is as follows. Catalyzes the transfer of the phosphoribosyl group of 5-phosphorylribose-1-pyrophosphate (PRPP) to anthranilate to yield N-(5'-phosphoribosyl)-anthranilate (PRA). This chain is Anthranilate phosphoribosyltransferase, found in Xanthomonas campestris pv. campestris (strain B100).